The chain runs to 340 residues: Ketol-acid reductoisomerase (NADP(+)) (340 aa).

Residues 1–182 (MTVTMQYEKD…GSARVGLLET (182 aa)) enclose the KARI N-terminal Rossmann domain. Residues 26–29 (YGSQ), R49, S53, and 83–86 (DEIQ) each bind NADP(+). Residue H108 is part of the active site. G134 is an NADP(+) binding site. The region spanning 183–328 (TFKEETEEDL…AELRKAMPFV (146 aa)) is the KARI C-terminal knotted domain. Positions 191, 195, 227, and 231 each coordinate Mg(2+). S252 serves as a coordination point for substrate.

The protein belongs to the ketol-acid reductoisomerase family. The cofactor is Mg(2+).

It carries out the reaction (2R)-2,3-dihydroxy-3-methylbutanoate + NADP(+) = (2S)-2-acetolactate + NADPH + H(+). The enzyme catalyses (2R,3R)-2,3-dihydroxy-3-methylpentanoate + NADP(+) = (S)-2-ethyl-2-hydroxy-3-oxobutanoate + NADPH + H(+). It participates in amino-acid biosynthesis; L-isoleucine biosynthesis; L-isoleucine from 2-oxobutanoate: step 2/4. The protein operates within amino-acid biosynthesis; L-valine biosynthesis; L-valine from pyruvate: step 2/4. In terms of biological role, involved in the biosynthesis of branched-chain amino acids (BCAA). Catalyzes an alkyl-migration followed by a ketol-acid reduction of (S)-2-acetolactate (S2AL) to yield (R)-2,3-dihydroxy-isovalerate. In the isomerase reaction, S2AL is rearranged via a Mg-dependent methyl migration to produce 3-hydroxy-3-methyl-2-ketobutyrate (HMKB). In the reductase reaction, this 2-ketoacid undergoes a metal-dependent reduction by NADPH to yield (R)-2,3-dihydroxy-isovalerate. The sequence is that of Ketol-acid reductoisomerase (NADP(+)) from Streptococcus suis (strain 98HAH33).